The sequence spans 1048 residues: MSDVNPPSDTPIPFSSSSTHSSHIPPWTFSCYPGSPCENGVMLYMRNVSHEELQRFKQLLLTELSTGTMPITWDQVETASWAEVVHLLIERFPGRRAWDVTSNIFAIMNCDKMCVVVRREINAILPTLEPEDLNVGETQVNLEEGESGKIRRYKSNVMEKFFPIWDITTWPGNQRDFFYQGVHRHEEYLPCLLLPKRPQGRQPKTVAIQGAPGIGKTILAKKVMFEWARNKFYAHKRWCAFYFHCQEVNQTTDQSFSELIEQKWPGSQDLVSKIMSKPDQLLLLLDGFEELTSTLIDRLEDLSEDWRQKLPGSVLLSSLLSKTMLPEATLLIMIRFTSWQTCKPLLKCPSLVTLPGFNTMEKIKYFQMYFGHTEEGDQVLSFAMENTILFSMCRVPVVCWMVCSGLKQQMERGNNLTQSCPNATSVFVRYISSLFPTRAENFSRKIHQAQLEGLCHLAADSMWHRKWVLGKEDLEEAKLDQTGVTAFLGMSILRRIAGEEDHYVFTLVTFQEFFAALFYVLCFPQRLKNFHVLSHVNIQRLIASPRGSKSYLSHMGLFLFGFLNEACASAVEQSFQCKVSFGNKRKLLKVIPLLHKCDPPSPGSGVPQLFYCLHEIREEAFVSQALNDYHKVVLRIGNNKEVQVSAFCLKRCQYLHEVELTVTLNFMNVWKLSSSSHPGSEAPESNGLHRWWQDLCSVFATNDKLEVLTMTNSVLGPPFLKALAAALRHPQCKLQKLLLRRVNSTMLNQDLIGVLTGNQHLRYLEIQHVEVESKAVKLLCRVLRSPRCRLQCLRLEDCLATPRIWTDLGNNLQGNGHLKTLILRKNSLENCGAYYLSVAQLERLSIENCNLTQLTCESLASCLRQSKMLTHLSLAENALKDEGAKHIWNALPHLRCPLQRLVLRKCDLTFNCCQDMISALCKNKTLKSLDLSFNSLKDDGVILLCEALKNPDCTLQILELENCLFTSICCQAMASMLRKNQHLRHLDLSKNAIGVYGILTLCEAFSSQKKREEVIFCIPAWTRITSFSPTPHPPDFTGKSDCLSQINP.

The segment at 1 to 23 (MSDVNPPSDTPIPFSSSSTHSSH) is disordered. The segment covering 11-23 (PIPFSSSSTHSSH) has biased composition (low complexity). The region spanning 33 to 131 (PGSPCENGVM…NAILPTLEPE (99 aa)) is the Pyrin domain. The NACHT domain occupies 204–527 (KTVAIQGAPG…FYVLCFPQRL (324 aa)). 210-217 (GAPGIGKT) serves as a coordination point for ATP. LRR repeat units lie at residues 815–838 (NGHLKTLILRKNSLENCGAYYLSV), 839–861 (AQLERLSIENCNLTQLTCESLAS), 866–890 (SKMLTHLSLAENALKDEGAKHIWNA), 923–950 (NKTLKSLDLSFNSLKDDGVILLCEALKN), and 980–1007 (NQHLRHLDLSKNAIGVYGILTLCEAFSS). Residues 1029 to 1048 (PTPHPPDFTGKSDCLSQINP) form a disordered region.

This sequence belongs to the NLRP family.

The protein resides in the cytoplasm. Its function is as follows. Involved in inflammation. The polypeptide is NACHT, LRR and PYD domains-containing protein 8 (NLRP8) (Homo sapiens (Human)).